Consider the following 394-residue polypeptide: Phosphoglycerate kinase (394 aa).

Substrate is bound by residues 21 to 23 (DFN), arginine 37, 60 to 63 (HLGR), arginine 119, and arginine 152. ATP is bound by residues lysine 202, glutamate 324, and 350–353 (GGDS).

This sequence belongs to the phosphoglycerate kinase family. Monomer.

The protein localises to the cytoplasm. The enzyme catalyses (2R)-3-phosphoglycerate + ATP = (2R)-3-phospho-glyceroyl phosphate + ADP. Its pathway is carbohydrate degradation; glycolysis; pyruvate from D-glyceraldehyde 3-phosphate: step 2/5. The chain is Phosphoglycerate kinase from Herpetosiphon aurantiacus (strain ATCC 23779 / DSM 785 / 114-95).